The primary structure comprises 861 residues: MEALGPGPPASLFQPPRRPGLGTVGKPIRLLANHFQVQIPKIDVYHYDVDIKPEKRPRRVNREVVDTMVRHFKMQIFGDRQPGYDGKRNMYTAHPLPIGRDRIDMEVTLPGEGKDQTFKVSVQWVSVVSLQLLLEALAGHLNEVPDDSVQALDVITRHLPSMRYTPVGRSFFSPPEGYYHPLGGGREVWFGFHQSVRPAMWNMMLNIDVSATAFYRAQPIIEFMCEVLDIQNINEQTKPLTDSQRVKFTKEIRGLKVEVTHCGQMKRKYRVCNVTRRPASHQTFPLQLENGQAMECTVAQYFKQKYSLQLKHPHLPCLQVGQEQKHTYLPLEVCNIVAGQRCIKKLTDNQTSTMIKATARSAPDRQEEISRLVKSNSMVGGPDPYLKEFGIVVHNEMTELTGRVLPAPMLQYGGRNKTVATPSQGVWDMRGKQFYAGIEIKVWAVACFAPQKQCREDLLKSFTDQLRKISKDAGMPIQGQPCFCKYAQGADSVEPMFKHLKMTYVGLQLIVVILPGKTPVYAEVKRVGDTLLGMATQCVQVKNVVKTSPQTLSNLCLKMNAKLGGINNVLVPHQRPSVFQQPVIFLGADVTHPPAGDGKKPSIAAVVGSMDGHPSRYCATVRVQTSRQEITQELLYSQEVVQDLTSMARELLIQFYKSTRFKPTRIIYYRGGVSEGQMKQVAWPELIAIRKACISLEEDYRPGITYIVVQKRHHTRLFCADKMERVGKSGNVPAGTTVDSTVTHPSEFDFYLCSHAGIQGTSRPSHYQVLWDDNCFTADELQLLTYQLCHTYVRCTRSVSIPAPAYYARLVAFRARYHLVDKDHDSAEGSHVSGQSNGRDPQALAKAVQIHHDTQHTMYFA.

One can recognise a PAZ domain in the interval 219-338 (PIIEFMCEVL…LPLEVCNIVA (120 aa)). The region spanning 509–820 (LIVVILPGKT…VAFRARYHLV (312 aa)) is the Piwi domain. A disordered region spans residues 825–846 (DSAEGSHVSGQSNGRDPQALAK).

The protein belongs to the argonaute family. Ago subfamily. In terms of assembly, interacts with EIF4B, IMP8, PRMT5, TNRC6A and TNRC6B. Interacts with ZFP36. Post-translationally, ubiquitinated on surface-exposed lysines by a SCF-like E3 ubiquitin-protein ligase complex containing ZSWIM8 during target-directed microRNA degradation (TDMD), a process that mediates degradation of microRNAs (miRNAs). Ubiquitination by the SCF-like E3 ubiquitin-protein ligase complex containing ZSWIM8 leads to its subsequent degradation, thereby exposing miRNAs for degradation. ZSWIM8 recognizes and binds AGO4 when it is engaged with a TDMD target.

Its subcellular location is the cytoplasm. The protein localises to the P-body. Functionally, required for RNA-mediated gene silencing (RNAi). Binds to short RNAs such as microRNAs (miRNAs) and represses the translation of mRNAs which are complementary to them. Lacks endonuclease activity and does not appear to cleave target mRNAs. The protein is Protein argonaute-4 (Ago4) of Mus musculus (Mouse).